Consider the following 470-residue polypeptide: Asparagine--tRNA ligase (470 aa).

It belongs to the class-II aminoacyl-tRNA synthetase family. Homodimer.

The protein resides in the cytoplasm. The catalysed reaction is tRNA(Asn) + L-asparagine + ATP = L-asparaginyl-tRNA(Asn) + AMP + diphosphate + H(+). The chain is Asparagine--tRNA ligase from Blochmanniella pennsylvanica (strain BPEN).